The primary structure comprises 374 residues: DNA replication and repair protein RecF (374 aa).

Residue 30 to 37 (GENAQGKT) participates in ATP binding.

Belongs to the RecF family.

The protein localises to the cytoplasm. Its function is as follows. The RecF protein is involved in DNA metabolism; it is required for DNA replication and normal SOS inducibility. RecF binds preferentially to single-stranded, linear DNA. It also seems to bind ATP. This is DNA replication and repair protein RecF from Geobacillus sp. (strain WCH70).